The following is a 398-amino-acid chain: L-rhamnonate dehydratase (398 aa).

Residues H22 and R48 each coordinate substrate. Mg(2+) contacts are provided by D214, E241, and E269. H319 serves as the catalytic Proton acceptor. E339 serves as a coordination point for substrate.

The protein belongs to the mandelate racemase/muconate lactonizing enzyme family. RhamD subfamily. In terms of assembly, homooctamer; tetramer of dimers. Requires Mg(2+) as cofactor.

The enzyme catalyses L-rhamnonate = 2-dehydro-3-deoxy-L-rhamnonate + H2O. Functionally, catalyzes the dehydration of L-rhamnonate to 2-keto-3-deoxy-L-rhamnonate (KDR). This Verminephrobacter eiseniae (strain EF01-2) protein is L-rhamnonate dehydratase.